Consider the following 308-residue polypeptide: MQEIENLHQSVLLQEVLQAFTPLEEGILIDCTLGLGGHSKAILSQKPHLKLIGIDKDKFAQEIAKERLKEFEGRYNLLSGGFAKRFKEALEIHGERIKGVLVDLGVSSLQLDDDNRGFNFRSHALDMRMDLESELNAQKVINSYPVVALEKIFRDYGEIKEYKKIAHKIAERRAKKPFKDAKDLSEFLSSLSKNKKIHPATLVFQAVRIEVNSELEELKEFLQCARNLKEAILCVISFHSLEDALVKNAFKDYAKNCICDPSSFKCACSNNHALGAILTKKPITPSPEEIKNNRRSRSAKMRVFQFKP.

Residues 36–38, Asp55, Phe82, Asp103, and Gln110 each bind S-adenosyl-L-methionine; that span reads GGH.

It belongs to the methyltransferase superfamily. RsmH family.

It localises to the cytoplasm. The enzyme catalyses cytidine(1402) in 16S rRNA + S-adenosyl-L-methionine = N(4)-methylcytidine(1402) in 16S rRNA + S-adenosyl-L-homocysteine + H(+). Functionally, specifically methylates the N4 position of cytidine in position 1402 (C1402) of 16S rRNA. This Helicobacter pylori (strain J99 / ATCC 700824) (Campylobacter pylori J99) protein is Ribosomal RNA small subunit methyltransferase H.